Consider the following 449-residue polypeptide: Xylose isomerase (449 aa).

Active-site residues include His101 and Asp104. Mg(2+) is bound by residues Glu232, Glu268, His271, Asp296, Asp307, Asp309, and Asp340.

The protein belongs to the xylose isomerase family. As to quaternary structure, homotetramer. Mg(2+) serves as cofactor.

It localises to the cytoplasm. It catalyses the reaction alpha-D-xylose = alpha-D-xylulofuranose. This chain is Xylose isomerase, found in Bifidobacterium longum (strain DJO10A).